The chain runs to 321 residues: NADPH-dependent codeinone reductase 1-2 (321 aa).

Positions 27 and 51 each coordinate NADPH. Residues Tyr56 and His119 each act as proton donor in the active site. A substrate-binding site is contributed by His119. The NADPH site is built by Ser165, Gln187, Ser214, Leu216, Ser264, and Arg269. A disordered region spans residues Ser299–Asp321.

Belongs to the aldo/keto reductase family. Latex secreting cells (laticifer cells). Expressed constitutively in all organs with highest levels in capsules. Restricted to the parietal region of sieve elements adjacent or proximal to laticifers in roots, stems, leaves and carpels.

The protein localises to the cytoplasm. Its subcellular location is the cytosol. It carries out the reaction codeine + NADP(+) = codeinone + NADPH + H(+). The catalysed reaction is neopine + NADP(+) = neopinone + NADPH + H(+). It catalyses the reaction morphine + NADP(+) = morphinone + NADPH + H(+). The enzyme catalyses neomorphine + NADP(+) = neomorphinone + NADPH + H(+). It functions in the pathway alkaloid biosynthesis; morphine biosynthesis. NADPH-dependent codeinone reductase involved in biosynthesis of morphinan-type benzylisoquinoline and opiate alkaloids natural products. Reduces codeinone to codeine in the penultimate step in morphine biosynthesis. Can use morphinone, hydrocodone and hydromorphone as substrate during reductive reaction with NADPH as cofactor, and morphine and dihydrocodeine as substrate during oxidative reaction with NADP as cofactor. Converts morphinone to morphine, and neomorphinone to neomorphine. Reduces irreversibly neopinone, a spontaneous isomer of codeinone, to neopine; in planta, neopine levels are limited to low levels. The polypeptide is NADPH-dependent codeinone reductase 1-2 (Papaver somniferum (Opium poppy)).